We begin with the raw amino-acid sequence, 90 residues long: U7-theraphotoxin-Hhn1l (90 aa).

The first 19 residues, 1 to 19, serve as a signal peptide directing secretion; it reads MKTAIFTVVLALAVFAVLS. The propeptide occupies 20–50; that stretch reads FGWEANEKALSEEFTELIHEKEAASETEARE. 3 disulfides stabilise this stretch: Cys51/Cys65, Cys58/Cys70, and Cys64/Cys81.

This sequence belongs to the neurotoxin 10 (Hwtx-1) family. 13 (Hntx-13) subfamily. Expressed by the venom gland.

It localises to the secreted. Its function is as follows. Ion channel inhibitor. This Cyriopagopus hainanus (Chinese bird spider) protein is U7-theraphotoxin-Hhn1l.